The chain runs to 240 residues: Sugar fermentation stimulation protein homolog (240 aa).

It belongs to the SfsA family.

This is Sugar fermentation stimulation protein homolog from Methanothermobacter thermautotrophicus (strain ATCC 29096 / DSM 1053 / JCM 10044 / NBRC 100330 / Delta H) (Methanobacterium thermoautotrophicum).